Consider the following 392-residue polypeptide: Acyl-CoA dehydrogenase IpdE1 (392 aa).

FAD-binding positions include 126–129 and Ser-171; that span reads QGYS. The Proton acceptor role is filled by Glu-254. 371-373 is an FAD binding site; the sequence is SNE.

The protein belongs to the acyl-CoA dehydrogenase family. In terms of assembly, heterotetramer composed of 2 IpdE1 subunits and 2 IpdE2 subunits. It depends on FAD as a cofactor.

It catalyses the reaction 3-[(3aS,4S,5R,7aS)-5-hydroxy-7a-methyl-1-oxo-octahydro-1H-inden-4-yl]propanoyl-CoA + A = (2E)-3-[(3aS,4S,5R,7aS)-5-hydroxy-7a-methyl-1-oxo-octahydro-1H-inden-4-yl]prop-2-enoyl-CoA + AH2. Its pathway is steroid metabolism; cholesterol degradation. Its function is as follows. Involved in cholesterol degradation. Catalyzes the dehydrogenation of 5OH-HIP-CoA to 5OH-HIPE-CoA. The chain is Acyl-CoA dehydrogenase IpdE1 from Mycolicibacterium smegmatis (strain ATCC 700084 / mc(2)155) (Mycobacterium smegmatis).